The following is a 783-amino-acid chain: Serine/threonine-protein kinase SIK1 (783 aa).

One can recognise a Protein kinase domain in the interval 27–278 (YDIERTLGKG…IAQIRQHRWM (252 aa)). ATP-binding positions include 33-41 (LGKGNFAVV) and Lys-56. Asp-149 (proton acceptor) is an active-site residue. Thr-182 is subject to Phosphothreonine; by LKB1 and GSK3-beta. Phosphoserine; by autocatalysis is present on Ser-186. Residues 303-343 (DYDEQALGIMQTLGVDRQRTVESLQNSSYNHFAAIYYLLLE) form the UBA domain. Position 322 is a phosphothreonine; by CaMK1 (Thr-322). Disordered stretches follow at residues 353-377 (CARP…VPQE) and 449-477 (RQGP…LAEV). Thr-473 bears the Phosphothreonine; by PKA mark. Phosphoserine; by PKA is present on Ser-575. The segment at 583-612 (LKAFRQQLRKTTRTKGFLGLNKIKGLARQV) is RK-rich region; required for cAMP responsiveness and nuclear localization. A disordered region spans residues 619 to 643 (RASRGGLSPFHAPAQSPGLHGGAAG).

It belongs to the protein kinase superfamily. CAMK Ser/Thr protein kinase family. AMPK subfamily. As to quaternary structure, interacts with ATP1A1. Interacts (when phosphorylated on Thr-182 and Ser-186) with YWHAZ. Interacts (when phosphorylated at Thr-473 and/or Ser-575) with 14-3-3 proteins; the interaction inhibits kinase activity towards TORCs. There is a cooperative effect of the phosphorylation sites in 14-3-3 binding as the interaction is stronger when both Thr-473 and Ser-575 are modified. Requires Mg(2+) as cofactor. Phosphorylated at Thr-182 by STK11/LKB1 in complex with STE20-related adapter-alpha (STRADA) pseudo kinase and CAB39, leading to its activation. Phosphorylation at Thr-182 promotes autophosphorylation at Ser-186, which is required for sustained activity. Autophosphorylation at Ser-186 is maintained by sequential phosphorylation at Thr-182 by GSK3-beta. GSK3-beta cannot initiate phosphorylation at Thr-182, it can only maintain it. Phosphorylation at Ser-575 in response to cAMP signaling promotes translocation to the cytoplasm. Phosphorylation at Thr-322 by CaMK1 following intracellular sodium concentration leads to activation.

The protein localises to the cytoplasm. It is found in the nucleus. The enzyme catalyses L-seryl-[protein] + ATP = O-phospho-L-seryl-[protein] + ADP + H(+). It carries out the reaction L-threonyl-[protein] + ATP = O-phospho-L-threonyl-[protein] + ADP + H(+). Its activity is regulated as follows. Activated by phosphorylation on Thr-182. Also activated by phosphorylation on Thr-322 in response to increases in intracellular sodium in parallel with elevations in intracellular calcium through the reversible sodium/calcium exchanger. Inhibited by phosphorylation at Thr-473 and Ser-575, probably by PKA, which triggers interaction with 14-3-3 proteins. In terms of biological role, serine/threonine-protein kinase involved in various processes such as cell cycle regulation, gluconeogenesis and lipogenesis regulation, muscle growth and differentiation and tumor suppression. Phosphorylates HDAC4, HDAC5, PPME1, SREBF1, CRTC1/TORC1. Inhibits CREB activity by phosphorylating and inhibiting activity of TORCs, the CREB-specific coactivators, like CRTC2/TORC2 and CRTC3/TORC3 in response to cAMP signaling. Acts as a tumor suppressor and plays a key role in p53/TP53-dependent anoikis, a type of apoptosis triggered by cell detachment: required for phosphorylation of p53/TP53 in response to loss of adhesion and is able to suppress metastasis. Part of a sodium-sensing signaling network, probably by mediating phosphorylation of PPME1: following increases in intracellular sodium, SIK1 is activated by CaMK1 and phosphorylates PPME1 subunit of protein phosphatase 2A (PP2A), leading to dephosphorylation of sodium/potassium-transporting ATPase ATP1A1 and subsequent increase activity of ATP1A1. Acts as a regulator of muscle cells by phosphorylating and inhibiting class II histone deacetylases HDAC4 and HDAC5, leading to promote expression of MEF2 target genes in myocytes. Also required during cardiomyogenesis by regulating the exit of cardiomyoblasts from the cell cycle via down-regulation of CDKN1C/p57Kip2. Acts as a regulator of hepatic gluconeogenesis by phosphorylating and repressing the CREB-specific coactivators CRTC1/TORC1 and CRTC2/TORC2, leading to inhibit CREB activity. Also regulates hepatic lipogenesis by phosphorylating and inhibiting SREBF1. In concert with CRTC1/TORC1, regulates the light-induced entrainment of the circadian clock by attenuating PER1 induction; represses CREB-mediated transcription of PER1 by phosphorylating and deactivating CRTC1/TORC1. This is Serine/threonine-protein kinase SIK1 (SIK1) from Homo sapiens (Human).